The following is a 297-amino-acid chain: Protein muscleblind (297 aa).

C3H1-type zinc fingers lie at residues 18 to 46 and 52 to 80; these read WLQL…HPPA and NGKV…HPPQ.

The protein belongs to the muscleblind family. Expressed in embryonic muscle cells.

The protein resides in the nucleus. Functionally, required for terminal differentiation of photoreceptor cells. Vital for embryonic development. The polypeptide is Protein muscleblind (mbl) (Drosophila melanogaster (Fruit fly)).